Consider the following 569-residue polypeptide: Urease subunit alpha (569 aa).

The Urease domain maps to 131–569 (GGIDAHIHWI…LPLAQRYFLF (439 aa)). His136, His138, and Lys219 together coordinate Ni(2+). Lys219 is modified (N6-carboxylysine). His221 serves as a coordination point for substrate. Ni(2+)-binding residues include His248 and His274. His322 functions as the Proton donor in the catalytic mechanism. Asp362 contacts Ni(2+).

It belongs to the metallo-dependent hydrolases superfamily. Urease alpha subunit family. In terms of assembly, heterotrimer of UreA (gamma), UreB (beta) and UreC (alpha) subunits. Three heterotrimers associate to form the active enzyme. Ni cation serves as cofactor. Post-translationally, carboxylation allows a single lysine to coordinate two nickel ions.

The protein localises to the cytoplasm. It carries out the reaction urea + 2 H2O + H(+) = hydrogencarbonate + 2 NH4(+). It functions in the pathway nitrogen metabolism; urea degradation; CO(2) and NH(3) from urea (urease route): step 1/1. This chain is Urease subunit alpha, found in Magnetococcus marinus (strain ATCC BAA-1437 / JCM 17883 / MC-1).